A 362-amino-acid chain; its full sequence is Phosphoserine aminotransferase (362 aa).

Position 43 (arginine 43) interacts with L-glutamate. Residues 77-78, tryptophan 103, threonine 153, aspartate 173, and glutamine 196 each bind pyridoxal 5'-phosphate; that span reads AT. Lysine 197 bears the N6-(pyridoxal phosphate)lysine mark. 238–239 is a pyridoxal 5'-phosphate binding site; the sequence is NT.

The protein belongs to the class-V pyridoxal-phosphate-dependent aminotransferase family. SerC subfamily. In terms of assembly, homodimer. Pyridoxal 5'-phosphate serves as cofactor.

It is found in the cytoplasm. It catalyses the reaction O-phospho-L-serine + 2-oxoglutarate = 3-phosphooxypyruvate + L-glutamate. The catalysed reaction is 4-(phosphooxy)-L-threonine + 2-oxoglutarate = (R)-3-hydroxy-2-oxo-4-phosphooxybutanoate + L-glutamate. Its pathway is amino-acid biosynthesis; L-serine biosynthesis; L-serine from 3-phospho-D-glycerate: step 2/3. The protein operates within cofactor biosynthesis; pyridoxine 5'-phosphate biosynthesis; pyridoxine 5'-phosphate from D-erythrose 4-phosphate: step 3/5. Functionally, catalyzes the reversible conversion of 3-phosphohydroxypyruvate to phosphoserine and of 3-hydroxy-2-oxo-4-phosphonooxybutanoate to phosphohydroxythreonine. The chain is Phosphoserine aminotransferase from Xylella fastidiosa (strain Temecula1 / ATCC 700964).